The sequence spans 304 residues: Ribosomal RNA small subunit methyltransferase H (304 aa).

S-adenosyl-L-methionine contacts are provided by residues 37 to 39 (GGH), Asp-57, Phe-79, Asp-100, and His-107.

It belongs to the methyltransferase superfamily. RsmH family.

The protein resides in the cytoplasm. It catalyses the reaction cytidine(1402) in 16S rRNA + S-adenosyl-L-methionine = N(4)-methylcytidine(1402) in 16S rRNA + S-adenosyl-L-homocysteine + H(+). Functionally, specifically methylates the N4 position of cytidine in position 1402 (C1402) of 16S rRNA. This Phocaeicola vulgatus (strain ATCC 8482 / DSM 1447 / JCM 5826 / CCUG 4940 / NBRC 14291 / NCTC 11154) (Bacteroides vulgatus) protein is Ribosomal RNA small subunit methyltransferase H.